The chain runs to 571 residues: Urease subunit alpha (571 aa).

Positions 134-571 (GAIDTHIHFI…LPMAQRYFLF (438 aa)) constitute a Urease domain. The Ni(2+) site is built by H139, H141, and K222. K222 bears the N6-carboxylysine mark. H224 provides a ligand contact to substrate. Ni(2+)-binding residues include H251 and H277. Catalysis depends on H325, which acts as the Proton donor. D365 is a binding site for Ni(2+).

Belongs to the metallo-dependent hydrolases superfamily. Urease alpha subunit family. In terms of assembly, heterotrimer of UreA (gamma), UreB (beta) and UreC (alpha) subunits. Three heterotrimers associate to form the active enzyme. The cofactor is Ni cation. Post-translationally, carboxylation allows a single lysine to coordinate two nickel ions.

It is found in the cytoplasm. It carries out the reaction urea + 2 H2O + H(+) = hydrogencarbonate + 2 NH4(+). The protein operates within nitrogen metabolism; urea degradation; CO(2) and NH(3) from urea (urease route): step 1/1. In Bordetella pertussis (strain Tohama I / ATCC BAA-589 / NCTC 13251), this protein is Urease subunit alpha.